A 488-amino-acid chain; its full sequence is MAESILDRTINRFWYNLGEDCLSESQFDLMIRLMEESLDGDQIIDLTSLPSDNLQVEQVMTTTDDSISEESEFLLAIGETSEDESDSGEEPEFEQVRMDRTGGTEIPKKEDGAEPSRYNERKRKTTEDRYFPTQPKTIPGQKQTSMGILNIDCQTNRRTLIDDWAAEIGLIVKTNREDYLDPETILLLMEHKTSGIAKELIRNTRWNRTTGDIIEQVIDAMYTMFLGLNYSDNKVAEKIDEQEKAKIRMTKLQLCDICYLEEFTCDYEKNMYKTELADFPGYINQYLSKIPIIGEKALTRFRHEANGTSIYSLGFAAKIVKEELSKICALSKKQKKLKKFNKKCCSIGEASVEYGCKKTSKKKYHNKRYKKKYKVYKPYKKKKKFRSGKYFKPKEKKGSKQKYCPKGKKDCRCWISNIEGHYANECPNRQSSEKAHILQQAEKLGLQPIEEPYEGVQEVFILEYKEEEEETSTEESDGSSTSEDSDSD.

The interval E79 to K142 is disordered. The span at T80 to F93 shows a compositional bias: acidic residues. The span at E94 to Y130 shows a compositional bias: basic and acidic residues. A Nuclear localization signal motif is present at residues R121–K124. A CCHC-type; degenerate zinc finger spans residues C411–N428. The segment at Y464 to D488 is disordered. The span at K465–D488 shows a compositional bias: acidic residues.

The protein belongs to the caulimoviridae capsid protein family. In terms of assembly, interacts (via nuclear localization signal) with host importin alpha.

The protein localises to the virion. It localises to the host nucleus. Self assembles to form an icosahedral capsid, about 50 nm in diameter, nm, composed of 420 subunits of the viral capsid protein. The capsid encapsulates the genomic dsDNA. Following virus entry into host cell, provides nuclear import of the viral genome. Virus particles do not enter the nucleus, but dock at the nuclear membrane through the interaction with host importins. The polypeptide is Capsid protein (Arabidopsis thaliana (Mouse-ear cress)).